Here is a 320-residue protein sequence, read N- to C-terminus: Malate dehydrogenase (320 aa).

Residues 10–15 and Asp-34 contribute to the NAD(+) site; that span reads GSGMIG. Arg-83 and Arg-89 together coordinate substrate. Residues Asn-96 and 119 to 121 contribute to the NAD(+) site; that span reads ITN. The substrate site is built by Asn-121 and Arg-152. Residue His-176 is the Proton acceptor of the active site.

It belongs to the LDH/MDH superfamily. MDH type 3 family.

The enzyme catalyses (S)-malate + NAD(+) = oxaloacetate + NADH + H(+). Functionally, catalyzes the reversible oxidation of malate to oxaloacetate. This Allorhizobium ampelinum (strain ATCC BAA-846 / DSM 112012 / S4) (Agrobacterium vitis (strain S4)) protein is Malate dehydrogenase.